Consider the following 360-residue polypeptide: 3-dehydroquinate synthase (360 aa).

NAD(+)-binding positions include 106 to 110 (GVIGD), 130 to 131 (TS), K143, and K152. Residues E185, H246, and H262 each contribute to the Zn(2+) site.

It belongs to the sugar phosphate cyclases superfamily. Dehydroquinate synthase family. The cofactor is Co(2+). Requires Zn(2+) as cofactor. NAD(+) serves as cofactor.

The protein localises to the cytoplasm. It catalyses the reaction 7-phospho-2-dehydro-3-deoxy-D-arabino-heptonate = 3-dehydroquinate + phosphate. The protein operates within metabolic intermediate biosynthesis; chorismate biosynthesis; chorismate from D-erythrose 4-phosphate and phosphoenolpyruvate: step 2/7. Its function is as follows. Catalyzes the conversion of 3-deoxy-D-arabino-heptulosonate 7-phosphate (DAHP) to dehydroquinate (DHQ). This Leuconostoc citreum (strain KM20) protein is 3-dehydroquinate synthase.